A 70-amino-acid chain; its full sequence is DNA-directed RNA polymerase subunit omega (70 aa).

It belongs to the RNA polymerase subunit omega family. In terms of assembly, the RNAP catalytic core consists of 2 alpha, 1 beta, 1 beta' and 1 omega subunit. When a sigma factor is associated with the core the holoenzyme is formed, which can initiate transcription.

The catalysed reaction is RNA(n) + a ribonucleoside 5'-triphosphate = RNA(n+1) + diphosphate. Promotes RNA polymerase assembly. Latches the N- and C-terminal regions of the beta' subunit thereby facilitating its interaction with the beta and alpha subunits. The sequence is that of DNA-directed RNA polymerase subunit omega from Thermoanaerobacter sp. (strain X514).